The chain runs to 95 residues: Protein TusB (95 aa).

This sequence belongs to the DsrH/TusB family. Heterohexamer, formed by a dimer of trimers. The hexameric TusBCD complex contains 2 copies each of TusB, TusC and TusD. The TusBCD complex interacts with TusE.

It localises to the cytoplasm. Functionally, part of a sulfur-relay system required for 2-thiolation of 5-methylaminomethyl-2-thiouridine (mnm(5)s(2)U) at tRNA wobble positions. This is Protein TusB from Escherichia coli (strain K12 / MC4100 / BW2952).